The sequence spans 434 residues: Monodehydroascorbate reductase 1, peroxisomal (434 aa).

FAD contacts are provided by residues 13–16 (GGVS), glutamate 40, arginine 47, lysine 52, isoleucine 95, and 146–147 (RE). Residues 171 to 177 (GGYIGLE), glutamate 195, arginine 201, and glycine 260 contribute to the NAD(+) site. An NADP(+)-binding site is contributed by 173–177 (YIGLE). NADP(+) is bound by residues arginine 201 and glycine 260. Aspartate 297 contacts FAD. Residue 313–314 (EH) coordinates NAD(+). 313 to 314 (EH) contacts NADP(+). Residue valine 315 coordinates FAD. L-ascorbate is bound at residue arginine 319. Tyrosine 348 is an FAD binding site. Tyrosine 348 contacts NAD(+). Residue tyrosine 348 coordinates NADP(+). Arginine 350 serves as a coordination point for L-ascorbate. Serine 416 is modified (phosphoserine).

Belongs to the FAD-dependent oxidoreductase family. FAD is required as a cofactor.

The protein localises to the peroxisome matrix. It carries out the reaction 2 monodehydro-L-ascorbate radical + NADH + H(+) = 2 L-ascorbate + NAD(+). Its function is as follows. Catalyzes the conversion of monodehydroascorbate to ascorbate, oxidizing NADH in the process. The chain is Monodehydroascorbate reductase 1, peroxisomal from Arabidopsis thaliana (Mouse-ear cress).